The following is a 620-amino-acid chain: Glutathione-regulated potassium-efflux system protein KefC (620 aa).

A run of 12 helical transmembrane segments spans residues 4 to 24, 26 to 46, 54 to 74, 90 to 110, 114 to 134, 149 to 169, 178 to 198, 218 to 238, 270 to 290, 294 to 314, 327 to 347, and 359 to 379; these read HTLIQALIYLGSAALIVPIAV, LGLGSVLGYLIAGCIIGPWGL, SILHFAEIGVVLMLFIIGLEL, GALQMVICGGLLGLFCMLLGL, VAELIGMTLALSSTAIAMQAM, FAVLLFQDIAAIPLVAMIPLL, MGAFALSALKVAGALVLVVLL, VFSAVALFLVFGFGLLLEEVG, GLLLGLFFIGVGMSIDFGTLL, LRIVILLLGFLIIKIAMLWLI, WFAVLLGQGSEFAFVVFGAAQ, and SLTLAVALSMAATPILLVILN. Residues 399-518 form the RCK N-terminal domain; sequence QPRVIIAGFG…AGVEKPERET (120 aa). Positions 597-620 are disordered; it reads GWQGTEEGKHTGNMADEPETKPSS.

It belongs to the monovalent cation:proton antiporter 2 (CPA2) transporter (TC 2.A.37) family. KefC subfamily. As to quaternary structure, homodimer. Interacts with the regulatory subunit KefF.

The protein localises to the cell inner membrane. In terms of biological role, pore-forming subunit of a potassium efflux system that confers protection against electrophiles. Catalyzes K(+)/H(+) antiport. This is Glutathione-regulated potassium-efflux system protein KefC from Escherichia coli O6:K15:H31 (strain 536 / UPEC).